A 173-amino-acid chain; its full sequence is ATP synthase subunit b (173 aa).

Residues 15-35 (GVEWGTVIVQVLTFIVLLALL) traverse the membrane as a helical segment.

This sequence belongs to the ATPase B chain family. In terms of assembly, F-type ATPases have 2 components, F(1) - the catalytic core - and F(0) - the membrane proton channel. F(1) has five subunits: alpha(3), beta(3), gamma(1), delta(1), epsilon(1). F(0) has three main subunits: a(1), b(2) and c(10-14). The alpha and beta chains form an alternating ring which encloses part of the gamma chain. F(1) is attached to F(0) by a central stalk formed by the gamma and epsilon chains, while a peripheral stalk is formed by the delta and b chains.

It is found in the cell membrane. Its function is as follows. F(1)F(0) ATP synthase produces ATP from ADP in the presence of a proton or sodium gradient. F-type ATPases consist of two structural domains, F(1) containing the extramembraneous catalytic core and F(0) containing the membrane proton channel, linked together by a central stalk and a peripheral stalk. During catalysis, ATP synthesis in the catalytic domain of F(1) is coupled via a rotary mechanism of the central stalk subunits to proton translocation. Functionally, component of the F(0) channel, it forms part of the peripheral stalk, linking F(1) to F(0). The chain is ATP synthase subunit b from Staphylococcus aureus (strain MSSA476).